Consider the following 466-residue polypeptide: Acetylornithine aminotransferase, mitochondrial (466 aa).

An N6-(pyridoxal phosphate)lysine modification is found at lysine 308.

This sequence belongs to the class-III pyridoxal-phosphate-dependent aminotransferase family. Pyridoxal 5'-phosphate serves as cofactor.

The protein resides in the mitochondrion matrix. The enzyme catalyses N(2)-acetyl-L-ornithine + 2-oxoglutarate = N-acetyl-L-glutamate 5-semialdehyde + L-glutamate. It functions in the pathway amino-acid biosynthesis; L-arginine biosynthesis; N(2)-acetyl-L-ornithine from L-glutamate: step 4/4. The polypeptide is Acetylornithine aminotransferase, mitochondrial (ARG8) (Debaryomyces hansenii (strain ATCC 36239 / CBS 767 / BCRC 21394 / JCM 1990 / NBRC 0083 / IGC 2968) (Yeast)).